Here is a 296-residue protein sequence, read N- to C-terminus: Probable redox regulatory protein BQ2027_MB0506C (296 aa).

Belongs to the Rv0495c family.

Its function is as follows. Essential for maintaining intracellular redox homeostasis. This chain is Probable redox regulatory protein BQ2027_MB0506C, found in Mycobacterium bovis (strain ATCC BAA-935 / AF2122/97).